A 273-amino-acid chain; its full sequence is MAIVKCKPTSAGRRHVVKIVNPELHKGKPYAPLLDTKSKTGGRNNFGRITTRHIGGGHKQHYRLIDFKRNKLDIPAVVERLEYDPNRSANIALVLYKDGERRYILAPKGLSAGDTIQSGANAPIKVGNALPMRNIPVGSTVHNVELKPGKGGQIARSAGAYVQIIAREGNYVTLRLRSGEMRKVLAECTATIGEVGNSEHMLRVLGKAGANRWRGIRPTVRGTAMNPVDHPHGGGEGRNFGKHPVTPWGVQTKGKKTRHNKRTDKFIVRRRGK.

2 disordered regions span residues 30–50 (YAPL…GRIT) and 221–273 (RGTA…RRGK). The segment covering 253–273 (KGKKTRHNKRTDKFIVRRRGK) has biased composition (basic residues).

The protein belongs to the universal ribosomal protein uL2 family. Part of the 50S ribosomal subunit. Forms a bridge to the 30S subunit in the 70S ribosome.

In terms of biological role, one of the primary rRNA binding proteins. Required for association of the 30S and 50S subunits to form the 70S ribosome, for tRNA binding and peptide bond formation. It has been suggested to have peptidyltransferase activity; this is somewhat controversial. Makes several contacts with the 16S rRNA in the 70S ribosome. The protein is Large ribosomal subunit protein uL2 of Pasteurella multocida (strain Pm70).